A 209-amino-acid polypeptide reads, in one-letter code: Glutathione S-transferase D1 (209 aa).

The region spanning 1 to 81 (MVDFYYLPGS…YLVEKYGKTD (81 aa)) is the GST N-terminal domain. Glutathione contacts are provided by residues Ser-10, 51–53 (HTI), and 65–67 (ESR). In terms of domain architecture, GST C-terminal spans 87-208 (CPKKRAVINQ…AGCLEFKKYF (122 aa)).

Belongs to the GST superfamily. Delta family. In terms of assembly, homodimer.

The enzyme catalyses RX + glutathione = an S-substituted glutathione + a halide anion + H(+). It catalyses the reaction 1,1,1-trichloro-2,2-bis(4-chlorophenyl)ethane = 1,1-dichloro-2,2-bis(4-chlorophenyl)ethylene + chloride + H(+). Conjugation of reduced glutathione to a wide number of exogenous and endogenous hydrophobic electrophiles. Has DDT dehydrochlorinase activity. May be involved in detoxification. The sequence is that of Glutathione S-transferase D1 from Drosophila melanogaster (Fruit fly).